Consider the following 208-residue polypeptide: MPNLDKLIIGFDHALRTLLTPAQTLRPVPGTQLPEAELNDLEKSESAALMRVNHVGEICAQALYQGQALTARNAEVQQTLAQAAREETEHLAWTERRINELSGRKSLLNPLWYGGSFAIGAFAGLLGDKWNLGFLAETERQVSAHLGGHLSRLPHADEKSRAIVTQMQIDEAGHATTAVAYGGAELPMPVKLVMRMASSVMTRTAYWV.

Fe cation-binding residues include E57, E87, H90, E139, E171, and H174.

Belongs to the COQ7 family. Fe cation is required as a cofactor.

The protein resides in the cell membrane. The enzyme catalyses a 5-methoxy-2-methyl-3-(all-trans-polyprenyl)benzene-1,4-diol + AH2 + O2 = a 3-demethylubiquinol + A + H2O. It functions in the pathway cofactor biosynthesis; ubiquinone biosynthesis. Functionally, catalyzes the hydroxylation of 2-nonaprenyl-3-methyl-6-methoxy-1,4-benzoquinol during ubiquinone biosynthesis. The chain is 3-demethoxyubiquinol 3-hydroxylase from Nitrosospira multiformis (strain ATCC 25196 / NCIMB 11849 / C 71).